The following is a 163-amino-acid chain: Probable chemoreceptor glutamine deamidase CheD (163 aa).

The protein belongs to the CheD family.

The enzyme catalyses L-glutaminyl-[protein] + H2O = L-glutamyl-[protein] + NH4(+). Its function is as follows. Probably deamidates glutamine residues to glutamate on methyl-accepting chemotaxis receptors (MCPs), playing an important role in chemotaxis. This is Probable chemoreceptor glutamine deamidase CheD from Borreliella afzelii (strain PKo) (Borrelia afzelii).